Here is a 71-residue protein sequence, read N- to C-terminus: Small ribosomal subunit protein bS18c (71 aa).

The protein belongs to the bacterial ribosomal protein bS18 family. In terms of assembly, part of the 30S ribosomal subunit.

The protein localises to the plastid. It localises to the cyanelle. This is Small ribosomal subunit protein bS18c (rps18) from Cyanophora paradoxa.